A 399-amino-acid chain; its full sequence is Transmembrane protein 237 homolog (399 aa).

Pro residues predominate over residues 1–11; that stretch reads MPPTSRPVPPP. The interval 1 to 158 is disordered; that stretch reads MPPTSRPVPP…PHDKRNMPAK (158 aa). Composition is skewed to basic and acidic residues over residues 36-45, 111-135, and 144-158; these read NQQRRFRENN, EAAK…DPRR, and KSFR…MPAK. Helical transmembrane passes span 222–242, 256–276, 301–321, and 343–363; these read IANI…IFSF, MSLP…VSAI, GLIT…CIQL, and VFNV…AFKP.

This sequence belongs to the TMEM237 family.

The protein localises to the membrane. Its subcellular location is the cell projection. It localises to the cilium. Component of the transition zone in primary cilia. Required for ciliogenesis. This is Transmembrane protein 237 homolog from Caenorhabditis elegans.